The following is a 295-amino-acid chain: MSHYKTGHKQPRFRYSVLARCVAWANISVQVLFPLAVTFTPVMAARAQHAVQPRLSMGNTTVTADNNVEKNVASFAANAGTFLSSQPDSDATRNFITGMATAKANQEIQEWLGKYGTARVKLNVDKDFSLKDSSLEMLYPIYDTPTNMLFTQGAIHRTDDRTQSNIGFGWRHFSGNDWMAGVNTFIDHDLSRSHTRIGVGAEYWRDYLKLSANGYIRASGWKKSPDIEDYQERPANGWDIRAEGYLPAWPQLGASLMYEQYYGDEVGLFGKDKRQKDPHAISAEVTYTPVPLTQQ.

The N-terminal stretch at 1–25 is a signal peptide; that stretch reads MSHYKTGHKQPRFRYSVLARCVAWA.

It belongs to the intimin/invasin family.

This Escherichia coli (strain K12) protein is Putative attaching and effacing protein homolog (eaeH).